Reading from the N-terminus, the 449-residue chain is Adenylosuccinate synthetase isozyme 1 A (449 aa).

The segment covering 1–10 (MSHKSCYTNP) has biased composition (polar residues). Residues 1–22 (MSHKSCYTNPGTGGKRPRNDKG) are disordered. Residues 34 to 40 (GDEGKGK) and 62 to 64 (GHT) contribute to the GTP site. Aspartate 35 (proton acceptor) is an active-site residue. Residues aspartate 35 and glycine 62 each coordinate Mg(2+). Aspartate 35 lines the substrate pocket. IMP-binding positions include 35-38 (DEGK), 60-63 (NAGH), threonine 155, arginine 169, asparagine 248, threonine 263, and arginine 327. Residue histidine 63 is the Proton donor of the active site. 323–329 (VTTGRKR) is a substrate binding site. Residues arginine 329, 355–357 (KLD), and 437–440 (GVGK) each bind GTP.

It belongs to the adenylosuccinate synthetase family. Homodimer. The cofactor is Mg(2+).

It is found in the cytoplasm. It catalyses the reaction IMP + L-aspartate + GTP = N(6)-(1,2-dicarboxyethyl)-AMP + GDP + phosphate + 2 H(+). The protein operates within purine metabolism; AMP biosynthesis via de novo pathway; AMP from IMP: step 1/2. In terms of biological role, component of the purine nucleotide cycle (PNC), which interconverts IMP and AMP to regulate the nucleotide levels in various tissues, and which contributes to glycolysis and ammoniagenesis. Catalyzes the first committed step in the biosynthesis of AMP from IMP. This is Adenylosuccinate synthetase isozyme 1 A (adss1a) from Salmo salar (Atlantic salmon).